The chain runs to 177 residues: Cell division protein ZapC (177 aa).

Belongs to the ZapC family. Interacts directly with FtsZ.

It is found in the cytoplasm. Contributes to the efficiency of the cell division process by stabilizing the polymeric form of the cell division protein FtsZ. Acts by promoting interactions between FtsZ protofilaments and suppressing the GTPase activity of FtsZ. This chain is Cell division protein ZapC, found in Shewanella oneidensis (strain ATCC 700550 / JCM 31522 / CIP 106686 / LMG 19005 / NCIMB 14063 / MR-1).